The following is a 232-amino-acid chain: 7-cyano-7-deazaguanine synthase 1 (232 aa).

Position 7–17 (7–17 (CSGGLDSVSLA)) interacts with ATP. 4 residues coordinate Zn(2+): C185, C193, C196, and C199.

The protein belongs to the QueC family. Zn(2+) is required as a cofactor.

The catalysed reaction is 7-carboxy-7-deazaguanine + NH4(+) + ATP = 7-cyano-7-deazaguanine + ADP + phosphate + H2O + H(+). Its pathway is purine metabolism; 7-cyano-7-deazaguanine biosynthesis. Catalyzes the ATP-dependent conversion of 7-carboxy-7-deazaguanine (CDG) to 7-cyano-7-deazaguanine (preQ(0)). The protein is 7-cyano-7-deazaguanine synthase 1 of Mesorhizobium japonicum (strain LMG 29417 / CECT 9101 / MAFF 303099) (Mesorhizobium loti (strain MAFF 303099)).